We begin with the raw amino-acid sequence, 497 residues long: Probable small intestine urate exporter (497 aa).

5 N-linked (GlcNAc...) asparagine glycosylation sites follow: N47, N56, N66, N75, and N90. 10 helical membrane-spanning segments follow: residues 149–169, 171–191, 203–223, 230–250, 292–312, 332–352, 368–388, 398–418, 431–451, and 461–481; these read SFLTLFIPLAANAGVALLIVL, IVQGIAQVMVLTGQYSIWVKW, IAGSGSMLGSFIVLLAGGLLC, YVFYIFGGIGCACCPLWFPLI, LPLWAILVSYFCEYWLFYTIM, ILSALPFVVGCICIILGGLLA, KLFTAIGVLFPSVILVSLPWV, FLVLSSAISSFCESGALVNFL, LLQVFAHIAGAISPTAAGFFI, and NVFLLSAAVNISGLVFYLIFG.

It belongs to the major facilitator superfamily. Sodium/anion cotransporter family. In terms of tissue distribution, abundantly expressed in pancreas, liver, colon and small intestine, less in kidney. Not detected in the adrenal glands, brain, placenta, heart, testis, skeletal muscle, and lungs.

The protein resides in the apical cell membrane. It catalyses the reaction 3 Na(+)(out) + phosphate(out) = 3 Na(+)(in) + phosphate(in). The catalysed reaction is urate(out) + n chloride(in) = urate(in) + n chloride(out). It carries out the reaction L-thyroxine(out) = L-thyroxine(in). The enzyme catalyses 3,3',5-triiodo-L-thyronine(out) = 3,3',5-triiodo-L-thyronine(in). Its function is as follows. Acts as a membrane potential-dependent organic anion transporter, the transport requires a low concentration of chloride ions. Mediates chloride-dependent transport of urate. Mediates sodium-independent high affinity transport of thyroid hormones including L-thyroxine (T4) and 3,3',5-triiodo-L-thyronine (T3). Can actively transport inorganic phosphate into cells via Na(+) cotransport. This is Probable small intestine urate exporter (SLC17A4) from Homo sapiens (Human).